A 122-amino-acid chain; its full sequence is Large ribosomal subunit protein uL14 (122 aa).

Belongs to the universal ribosomal protein uL14 family. In terms of assembly, part of the 50S ribosomal subunit. Forms a cluster with proteins L3 and L19. In the 70S ribosome, L14 and L19 interact and together make contacts with the 16S rRNA in bridges B5 and B8.

Functionally, binds to 23S rRNA. Forms part of two intersubunit bridges in the 70S ribosome. This chain is Large ribosomal subunit protein uL14, found in Mesorhizobium japonicum (strain LMG 29417 / CECT 9101 / MAFF 303099) (Mesorhizobium loti (strain MAFF 303099)).